A 166-amino-acid polypeptide reads, in one-letter code: Protein-export protein SecB (166 aa).

It belongs to the SecB family. As to quaternary structure, homotetramer, a dimer of dimers. One homotetramer interacts with 1 SecA dimer.

The protein resides in the cytoplasm. In terms of biological role, one of the proteins required for the normal export of preproteins out of the cell cytoplasm. It is a molecular chaperone that binds to a subset of precursor proteins, maintaining them in a translocation-competent state. It also specifically binds to its receptor SecA. The polypeptide is Protein-export protein SecB (Sinorhizobium fredii (strain NBRC 101917 / NGR234)).